The primary structure comprises 451 residues: Bifunctional protein GlmU (451 aa).

Residues 1–225 are pyrophosphorylase; the sequence is MSLAVVILAA…EFEIQGVNDR (225 aa). Residues 8-11, K22, Q73, 78-79, 99-101, G135, E150, N165, and N223 contribute to the UDP-N-acetyl-alpha-D-glucosamine site; these read LAAG, GT, and YGD. D101 provides a ligand contact to Mg(2+). N223 is a binding site for Mg(2+). The tract at residues 226-246 is linker; it reads IQLAQLEREWQKHIAEVIMSK. The tract at residues 247-451 is N-acetyltransferase; it reads GVSVADPSRI…IDTWQRPVKK (205 aa). 2 residues coordinate UDP-N-acetyl-alpha-D-glucosamine: R329 and K347. H359 acts as the Proton acceptor in catalysis. Residues Y362 and N373 each contribute to the UDP-N-acetyl-alpha-D-glucosamine site. Acetyl-CoA contacts are provided by residues A376, 382-383, S401, A419, and R436; that span reads NY.

This sequence in the N-terminal section; belongs to the N-acetylglucosamine-1-phosphate uridyltransferase family. In the C-terminal section; belongs to the transferase hexapeptide repeat family. Homotrimer. Mg(2+) serves as cofactor.

The protein resides in the cytoplasm. The enzyme catalyses alpha-D-glucosamine 1-phosphate + acetyl-CoA = N-acetyl-alpha-D-glucosamine 1-phosphate + CoA + H(+). The catalysed reaction is N-acetyl-alpha-D-glucosamine 1-phosphate + UTP + H(+) = UDP-N-acetyl-alpha-D-glucosamine + diphosphate. Its pathway is nucleotide-sugar biosynthesis; UDP-N-acetyl-alpha-D-glucosamine biosynthesis; N-acetyl-alpha-D-glucosamine 1-phosphate from alpha-D-glucosamine 6-phosphate (route II): step 2/2. It functions in the pathway nucleotide-sugar biosynthesis; UDP-N-acetyl-alpha-D-glucosamine biosynthesis; UDP-N-acetyl-alpha-D-glucosamine from N-acetyl-alpha-D-glucosamine 1-phosphate: step 1/1. It participates in bacterial outer membrane biogenesis; LPS lipid A biosynthesis. Functionally, catalyzes the last two sequential reactions in the de novo biosynthetic pathway for UDP-N-acetylglucosamine (UDP-GlcNAc). The C-terminal domain catalyzes the transfer of acetyl group from acetyl coenzyme A to glucosamine-1-phosphate (GlcN-1-P) to produce N-acetylglucosamine-1-phosphate (GlcNAc-1-P), which is converted into UDP-GlcNAc by the transfer of uridine 5-monophosphate (from uridine 5-triphosphate), a reaction catalyzed by the N-terminal domain. This chain is Bifunctional protein GlmU, found in Francisella philomiragia subsp. philomiragia (strain ATCC 25017 / CCUG 19701 / FSC 153 / O#319-036).